The primary structure comprises 304 residues: N-acetyl-D-glucosamine kinase (304 aa).

ATP is bound by residues 4-11 and 133-140; these read GFDMGGTK and GVGGGLIV. Zn(2+)-binding residues include histidine 157, cysteine 177, cysteine 179, and cysteine 184.

Belongs to the ROK (NagC/XylR) family. NagK subfamily.

It carries out the reaction N-acetyl-D-glucosamine + ATP = N-acetyl-D-glucosamine 6-phosphate + ADP + H(+). It functions in the pathway cell wall biogenesis; peptidoglycan recycling. In terms of biological role, catalyzes the phosphorylation of N-acetyl-D-glucosamine (GlcNAc) derived from cell-wall degradation, yielding GlcNAc-6-P. The chain is N-acetyl-D-glucosamine kinase from Yersinia pseudotuberculosis serotype IB (strain PB1/+).